The primary structure comprises 170 residues: E1B protein, small T-antigen (170 aa).

It belongs to the adenoviridae E1B 19 kDa protein family.

This is E1B protein, small T-antigen from Canine adenovirus serotype 2 (CAdV-2).